Here is a 279-residue protein sequence, read N- to C-terminus: Acetylglutamate kinase (279 aa).

Substrate is bound by residues Gly64–Gly65, Arg86, and Asn177.

Belongs to the acetylglutamate kinase family. ArgB subfamily.

The protein resides in the cytoplasm. It carries out the reaction N-acetyl-L-glutamate + ATP = N-acetyl-L-glutamyl 5-phosphate + ADP. Its pathway is amino-acid biosynthesis; L-arginine biosynthesis; N(2)-acetyl-L-ornithine from L-glutamate: step 2/4. Its function is as follows. Catalyzes the ATP-dependent phosphorylation of N-acetyl-L-glutamate. In Campylobacter jejuni subsp. jejuni serotype O:6 (strain 81116 / NCTC 11828), this protein is Acetylglutamate kinase.